A 47-amino-acid chain; its full sequence is Turripeptide Ici9.1 (47 aa).

Intrachain disulfides connect C1/C31, C5/C24, and C13/C45. Residues 1–47 form the Kazal-like domain; it reads CLSVCSMEYWPVCGSDGKTYPNECHLTSEACMSNTDITVAHVGKCDQ.

This sequence belongs to the conopeptide P-like superfamily. As to expression, expressed by the venom duct.

Its subcellular location is the secreted. In terms of biological role, acts as a neurotoxin by inhibiting an ion channel. May also act as a serine protease inhibitor, since it possess the kazal serine protease inhibitor signature. The protein is Turripeptide Ici9.1 of Iotyrris cingulifera (Sea snail).